The chain runs to 179 residues: Gamma-crystallin S (179 aa).

An N-acetylserine modification is found at serine 2. Residues 2–5 are N-terminal arm; the sequence is SKTG. Beta/gamma crystallin 'Greek key' domains lie at 6-44 and 45-87; these read TKIT…RVEG and GTWA…RALH. A connecting peptide region spans residues 88 to 93; the sequence is LSSGGQ. 2 Beta/gamma crystallin 'Greek key' domains span residues 94–134 and 135–177; these read YKIQ…KVLD and GAWI…RRIV.

The protein belongs to the beta/gamma-crystallin family. Monomer.

Functionally, crystallins are the dominant structural components of the vertebrate eye lens. The chain is Gamma-crystallin S (CRYGS) from Oryctolagus cuniculus (Rabbit).